Consider the following 511-residue polypeptide: Probable pectinesterase/pectinesterase inhibitor 17 (511 aa).

The N-terminal stretch at 1 to 23 (MMAFRAYIINFVILCILVASTVS) is a signal peptide. The tract at residues 24–171 (GYNQKDVKAW…SNLLCNTLAI (148 aa)) is pectinesterase inhibitor 17. 2 N-linked (GlcNAc...) asparagine glycosylation sites follow: asparagine 112 and asparagine 160. The pectinesterase 17 stretch occupies residues 237-414 (VKQGVYSENL…LRPVLGSTKT (178 aa)). Residues threonine 277 and glutamine 307 each coordinate substrate. The active-site Proton donor; for pectinesterase activity is aspartate 330. Cysteines 344 and 364 form a disulfide. Catalysis depends on aspartate 351, which acts as the Nucleophile; for pectinesterase activity. Substrate is bound by residues arginine 418 and tryptophan 420.

In the N-terminal section; belongs to the PMEI family. It in the C-terminal section; belongs to the pectinesterase family. Expressed in siliques.

It is found in the secreted. It localises to the cell wall. It catalyses the reaction [(1-&gt;4)-alpha-D-galacturonosyl methyl ester](n) + n H2O = [(1-&gt;4)-alpha-D-galacturonosyl](n) + n methanol + n H(+). Its pathway is glycan metabolism; pectin degradation; 2-dehydro-3-deoxy-D-gluconate from pectin: step 1/5. Acts in the modification of cell walls via demethylesterification of cell wall pectin. This is Probable pectinesterase/pectinesterase inhibitor 17 (PME17) from Arabidopsis thaliana (Mouse-ear cress).